A 273-amino-acid polypeptide reads, in one-letter code: MMKRQFEDVTRIVIKIGTSSLVLPTGKINLEKIDQLAFVISSLMNKGKEVILVSSGAMGFGLDILKMEKRPTNLAKQQAVSSVGQVAMMSLYSQIFAHYQTNVSQILLTRDVVVFPESLANVTNAFESLISFGIVPIVNENDAVSVDEMDHATKFGDNDRLSAVVAGITKADLLIMLSDIDGLFDKNPTIYEDAQLRSHVAVITQEIIASAGGAGSKFGTGGMLSKIQSAQMVFENKGQMVLMNGANPRDILRVLEGQPLGTWFKQIEEVRHD.

An ATP-binding site is contributed by Lys-15. Substrate contacts are provided by Ser-55, Asp-142, and Asn-158. ATP contacts are provided by residues 178-179 (SD) and 220-226 (TGGMLSK).

This sequence belongs to the glutamate 5-kinase family.

It is found in the cytoplasm. It carries out the reaction L-glutamate + ATP = L-glutamyl 5-phosphate + ADP. It functions in the pathway amino-acid biosynthesis; L-proline biosynthesis; L-glutamate 5-semialdehyde from L-glutamate: step 1/2. Its function is as follows. Catalyzes the transfer of a phosphate group to glutamate to form L-glutamate 5-phosphate. The protein is Glutamate 5-kinase of Streptococcus pyogenes serotype M3 (strain ATCC BAA-595 / MGAS315).